The chain runs to 221 residues: uncharacterized protein (221 aa).

This is an uncharacterized protein from Methanocaldococcus jannaschii (strain ATCC 43067 / DSM 2661 / JAL-1 / JCM 10045 / NBRC 100440) (Methanococcus jannaschii).